A 420-amino-acid chain; its full sequence is Histidine--tRNA ligase (420 aa).

Belongs to the class-II aminoacyl-tRNA synthetase family. In terms of assembly, homodimer.

Its subcellular location is the cytoplasm. The enzyme catalyses tRNA(His) + L-histidine + ATP = L-histidyl-tRNA(His) + AMP + diphosphate + H(+). This Thermodesulfovibrio yellowstonii (strain ATCC 51303 / DSM 11347 / YP87) protein is Histidine--tRNA ligase.